Consider the following 496-residue polypeptide: Flotillin-like protein 3 (496 aa).

A lipid anchor (S-palmitoyl cysteine) is attached at C37. The stretch at 301-328 (VVREAELQLEVERKNALRLTEKLKAEKL) forms a coiled coil.

Belongs to the band 7/mec-2 family. Flotillin subfamily. May be palmitoylated.

The protein localises to the cell membrane. Its subcellular location is the membrane. It is found in the caveola. Its function is as follows. May act as a scaffolding protein within caveolar membranes, functionally participating in formation of caveolae or caveolae-like vesicles. The protein is Flotillin-like protein 3 (FLOT3) of Oryza sativa subsp. japonica (Rice).